The following is a 158-amino-acid chain: Sec-independent protein translocase protein TatB (158 aa).

A helical transmembrane segment spans residues 2-22 (FDGIGFMELLLIGVLGLVVLG). The disordered stretch occupies residues 86–158 (LKQAAQSVNR…DTSSNPKANG (73 aa)). 3 stretches are compositionally biased toward polar residues: residues 88 to 107 (QAAQ…SQGT), 113 to 136 (QIHS…QHLT), and 143 to 158 (EPSQ…KANG).

Belongs to the TatB family. In terms of assembly, the Tat system comprises two distinct complexes: a TatABC complex, containing multiple copies of TatA, TatB and TatC subunits, and a separate TatA complex, containing only TatA subunits. Substrates initially bind to the TatABC complex, which probably triggers association of the separate TatA complex to form the active translocon.

It localises to the cell inner membrane. Part of the twin-arginine translocation (Tat) system that transports large folded proteins containing a characteristic twin-arginine motif in their signal peptide across membranes. Together with TatC, TatB is part of a receptor directly interacting with Tat signal peptides. TatB may form an oligomeric binding site that transiently accommodates folded Tat precursor proteins before their translocation. The polypeptide is Sec-independent protein translocase protein TatB (Shewanella putrefaciens (strain CN-32 / ATCC BAA-453)).